Consider the following 67-residue polypeptide: Myrmicitoxin(1)-Pm6a (67 aa).

The N-terminal stretch at 1-25 is a signal peptide; that stretch reads MRSLYLSFSLTIIFVLVIMHAEAKA. Positions 26–37 are excised as a propeptide; the sequence is ISEPNAIAEADP. Residue V66 is modified to Valine amide.

The protein belongs to the formicidae venom clade 3 family. As to expression, expressed by the venom gland.

The protein localises to the secreted. Its function is as follows. Toxin that causes a rapid and irreversible paralysis when intrathoracically injected into insects (blowflies). Does not cause spontaneous nocifensive behaviors by intraplantar injection in mice. Exhibits hemolytic and cytotoxic activities on HEK293 cells. The protein is Myrmicitoxin(1)-Pm6a of Pogonomyrmex maricopa (Maricopa harvester ant).